An 87-amino-acid chain; its full sequence is NADH-ubiquinone oxidoreductase chain 4L (87 aa).

2 consecutive transmembrane segments (helical) span residues 22-42 and 49-69; these read FLSF…FIIG and LFLI…SLLV.

The protein belongs to the complex I subunit 4L family.

The protein resides in the mitochondrion membrane. It carries out the reaction a ubiquinone + NADH + 5 H(+)(in) = a ubiquinol + NAD(+) + 4 H(+)(out). Functionally, core subunit of the mitochondrial membrane respiratory chain NADH dehydrogenase (Complex I) that is believed to belong to the minimal assembly required for catalysis. Complex I functions in the transfer of electrons from NADH to the respiratory chain. The immediate electron acceptor for the enzyme is believed to be ubiquinone. The sequence is that of NADH-ubiquinone oxidoreductase chain 4L (ND4L) from Apis mellifera ligustica (Common honeybee).